The following is a 104-amino-acid chain: uncharacterized protein (104 aa).

The HIT domain maps to 3–104 (VFEKIIQGEI…HFHILSGDKH (102 aa)). The Histidine triad motif motif lies at 93 to 97 (HLHFH).

This is an uncharacterized protein from Helicobacter pylori (strain J99 / ATCC 700824) (Campylobacter pylori J99).